Consider the following 37-residue polypeptide: Large ribosomal subunit protein bL36 (37 aa).

Belongs to the bacterial ribosomal protein bL36 family.

The chain is Large ribosomal subunit protein bL36 from Heliobacterium modesticaldum (strain ATCC 51547 / Ice1).